Here is an 885-residue protein sequence, read N- to C-terminus: MAPPSPREHQSAPATGATKPDAEMVLPGFPDADSFVKFALGSVVAVTKASGGLPQVGDEYDFYRSFPAFQAFCETQGDRLLQCMSRVMQYHGCRSNIKDRSKVTELEDKFDLLVDTNDVILERVGILLDEASGVNKHQQPVLPAGLQVPKTIVSSWNRKAGEYGKKAKAETFRLLHAKNILRPQLRFREKIDNSNTPFLPKIFVKPNARKPLPQALSKERRERPQDRPEDLDVPPALADFIHQQRAQQVEQDVFAHPYQYELDHFTPPPSVLQRPQPQLYRPVEETPCHVVSSLDELVELNEKLLGCQEFAVDLEHHSYRSFLGLTCLMQISTRTEDFIVDTLELRSDMYILNESLTDPAIVKVFHGADSDIEWLQKDFGLYVVNMFDTHQAARLLNLARHSLDHLLRLYCGVESNKQYQLADWRIRPLPEEMLNYARDDTHYLLYIYDRMRLELWERGNDQPVQLQVVWQRSRDICLKKFVKPIFTDESYLELYRKQKKHLNSQQLTAFQLLFAWRDKTARREDESYGYVLPNHMMLKIAEELPKEPQGIIACCNPVPPLVRQQINEMHLLIQQAREMPLLKSETAAGVKKSGPLPSAERLENDLFGPHDCSHAPPDNYPVTSTDGTMPLQKQPSLFDEGKEETSVDARCLLATAVITLFSEPSTEEAGKTPLTVAQKKAQSIMESFENPFRMFLPSLENKAHISQAAKFDPSSKIYEISNRWKLASQVQKEPKEAAKKKVAEQTAAREETKEESTAAVLEQPIPVRQQAALENATKKRERATSDLRTIEQKQEKKRLKSSKKAKDPDPPGKDFSPYDYSQSDFGAFAGDSKSKPSSQFDPNKVAPSGKKCFGAKKFKQSVGNKSMSFPAGKSDRGFRHNWPKR.

The segment covering 1–10 has biased composition (basic and acidic residues); it reads MAPPSPREHQ. Disordered regions lie at residues 1–23 and 210–232; these read MAPP…PDAE and KPLP…EDLD. A Glycyl lysine isopeptide (Lys-Gly) (interchain with G-Cter in SUMO2) cross-link involves residue Lys-19. The segment covering 217–230 has biased composition (basic and acidic residues); the sequence is SKERRERPQDRPED. The 3'-5' exonuclease domain occupies 289–455; that stretch reads HVVSSLDELV…YIYDRMRLEL (167 aa). The Mg(2+) site is built by Asp-313, Glu-315, Asp-371, and Asp-440. The HRDC domain occupies 503–583; the sequence is NSQQLTAFQL…QQAREMPLLK (81 aa). Lys-583 participates in a covalent cross-link: Glycyl lysine isopeptide (Lys-Gly) (interchain with G-Cter in SUMO1); alternate. A Glycyl lysine isopeptide (Lys-Gly) (interchain with G-Cter in SUMO2); alternate cross-link involves residue Lys-583. Lys-710 participates in a covalent cross-link: Glycyl lysine isopeptide (Lys-Gly) (interchain with G-Cter in SUMO2). Positions 730 to 885 are disordered; that stretch reads VQKEPKEAAK…RGFRHNWPKR (156 aa). Composition is skewed to basic and acidic residues over residues 732-756 and 776-794; these read KEPK…KEES and ATKK…EQKQ. At Ser-821 the chain carries Phosphoserine. Glycyl lysine isopeptide (Lys-Gly) (interchain with G-Cter in SUMO2) cross-links involve residues Lys-833, Lys-859, and Lys-873.

The protein belongs to the exosome component 10/RRP6 family. Component of the RNA exosome complex. The catalytically inactive RNA exosome core complex (Exo-9) associates with the catalytic subunit EXOSC10/RRP6 (via its N-terminus). Exo-9 may associate with DIS3 to form the nucleolar exosome complex, or DIS3L to form the cytoplasmic exosome complex. The RNA exosome complex interacts with cofactors C1D/RRP47, MPHOSPH6/MPP6 and MTREX/MTR4. Interacts with MTREX; the interaction with MTREX mediates the association of MTREX with nuclear RNA exosomes. Part of the small subunit (SSU) processome, composed of more than 70 proteins and the RNA chaperone small nucleolar RNA (snoRNA) U3. Interacts with ALYREF/THOC4. Interacts with DHX36; this interaction occurs in a RNase-insensitive manner. Interacts with NRDE2. Interacts (via C-terminus) with USP36 (via C-terminus); the interaction is facilitated by the association with RNA and promotes sumoylation of EXOSC10. It depends on Mg(2+) as a cofactor. Post-translationally, sumoylated by USP36; sumoylation does not significantly affect EXOSC10 nucleolar localization and association with core exosome and USP36, but regulates the nucleolar RNA exosome activity in rRNA processing by promoting binding of EXOSC10 to pre-rRNAs. Effects of sumoylation on EXOSC10 levels vary between different studies. Sumoylation of EXOSC10 is required for the modulation of EXOSC10 effects on cellular protein translation and cell proliferation. Sumoylation is promoted by mild hypothermia. In terms of tissue distribution, expressed in testis (at protein level).

It is found in the cytoplasm. The protein resides in the nucleus. Its subcellular location is the nucleolus. The protein localises to the nucleoplasm. Catalytic component of the RNA exosome complex which has 3'-&gt;5' exoribonuclease activity and participates in a multitude of cellular RNA processing and degradation events. In the nucleus, the RNA exosome complex is involved in proper maturation of stable RNA species such as rRNA, snRNA and snoRNA, in the elimination of RNA processing by-products and non-coding 'pervasive' transcripts, such as antisense RNA species and promoter-upstream transcripts (PROMPTs), and of mRNAs with processing defects, thereby limiting or excluding their export to the cytoplasm. Part of the small subunit (SSU) processome, first precursor of the small eukaryotic ribosomal subunit. During the assembly of the SSU processome in the nucleolus, many ribosome biogenesis factors, an RNA chaperone and ribosomal proteins associate with the nascent pre-rRNA and work in concert to generate RNA folding, modifications, rearrangements and cleavage as well as targeted degradation of pre-ribosomal RNA by the RNA exosome. The RNA exosome may be involved in Ig class switch recombination (CSR) and/or Ig variable region somatic hypermutation (SHM) by targeting AICDA deamination activity to transcribed dsDNA substrates. In the cytoplasm, the RNA exosome complex is involved in general mRNA turnover and specifically degrades inherently unstable mRNAs containing AU-rich elements (AREs) within their 3' untranslated regions, and in RNA surveillance pathways, preventing translation of aberrant mRNAs. It seems to be involved in degradation of histone mRNA. EXOSC10 is required for nucleolar localization of C1D and probably mediates the association of MTREX, C1D and MPHOSPH6 with the RNA exosome involved in the maturation of 5.8S rRNA. Plays a role in the recruitment of replication protein A complex (RPA) and RAD51 to DNA double-strand breaks caused by irradiation, contributing to DNA repair by homologous recombination. Regulates levels of damage-induced RNAs in order to prevent DNA-RNA hybrid formation at DNA double-strand breaks and limit DNA end resection after damage. Plays a role in oocyte development, maturation and survival. Required for normal testis development and mitotic division of spermatogonia. Plays a role in proper embryo development. Required for global protein translation. Required for cell proliferation. The chain is Exosome complex component 10 from Rattus norvegicus (Rat).